The following is a 407-amino-acid chain: Arginine deiminase (407 aa).

Cys397 (amidino-cysteine intermediate) is an active-site residue.

It belongs to the arginine deiminase family.

Its subcellular location is the cytoplasm. It catalyses the reaction L-arginine + H2O = L-citrulline + NH4(+). It functions in the pathway amino-acid degradation; L-arginine degradation via ADI pathway; carbamoyl phosphate from L-arginine: step 1/2. The protein is Arginine deiminase of Vibrio parahaemolyticus serotype O3:K6 (strain RIMD 2210633).